Here is a 637-residue protein sequence, read N- to C-terminus: 1-deoxy-D-xylulose-5-phosphate synthase (637 aa).

Thiamine diphosphate-binding positions include histidine 76 and 117–119 (AHS). Residue aspartate 148 coordinates Mg(2+). Thiamine diphosphate-binding positions include 149 to 150 (GA), asparagine 177, tyrosine 287, and glutamate 369. A Mg(2+)-binding site is contributed by asparagine 177.

It belongs to the transketolase family. DXPS subfamily. As to quaternary structure, homodimer. Mg(2+) is required as a cofactor. Requires thiamine diphosphate as cofactor.

It carries out the reaction D-glyceraldehyde 3-phosphate + pyruvate + H(+) = 1-deoxy-D-xylulose 5-phosphate + CO2. It functions in the pathway metabolic intermediate biosynthesis; 1-deoxy-D-xylulose 5-phosphate biosynthesis; 1-deoxy-D-xylulose 5-phosphate from D-glyceraldehyde 3-phosphate and pyruvate: step 1/1. Its function is as follows. Catalyzes the acyloin condensation reaction between C atoms 2 and 3 of pyruvate and glyceraldehyde 3-phosphate to yield 1-deoxy-D-xylulose-5-phosphate (DXP). This is 1-deoxy-D-xylulose-5-phosphate synthase from Pelagibacter ubique (strain HTCC1062).